The primary structure comprises 564 residues: Beta-N-acetylglucosaminidase/beta-glucosidase (564 aa).

Aspartate 283 serves as the catalytic Nucleophile.

The protein belongs to the glycosyl hydrolase 3 family.

The catalysed reaction is Hydrolysis of terminal non-reducing N-acetyl-D-hexosamine residues in N-acetyl-beta-D-hexosaminides.. It carries out the reaction Hydrolysis of terminal, non-reducing beta-D-glucosyl residues with release of beta-D-glucose.. Functionally, catalyzes the cleavage of beta-N-acetyl-D-glucosaminides and beta-D-glucosides. Might be involved in the degradation of glucuronic acid-containing glycosaminoglycans such as hyaluronic acid. The polypeptide is Beta-N-acetylglucosaminidase/beta-glucosidase (nag3) (Cellulomonas fimi).